Here is a 203-residue protein sequence, read N- to C-terminus: Octanoyltransferase (203 aa).

The BPL/LPL catalytic domain maps to 32–203 (ISTPDEIWLV…LMHKIREIFS (172 aa)). Residues 71 to 78 (RGGKITYH), 138 to 140 (SLG), and 151 to 153 (GMA) contribute to the substrate site. Residue Cys-169 is the Acyl-thioester intermediate of the active site.

It belongs to the LipB family.

Its subcellular location is the cytoplasm. It carries out the reaction octanoyl-[ACP] + L-lysyl-[protein] = N(6)-octanoyl-L-lysyl-[protein] + holo-[ACP] + H(+). The protein operates within protein modification; protein lipoylation via endogenous pathway; protein N(6)-(lipoyl)lysine from octanoyl-[acyl-carrier-protein]: step 1/2. Functionally, catalyzes the transfer of endogenously produced octanoic acid from octanoyl-acyl-carrier-protein onto the lipoyl domains of lipoate-dependent enzymes. Lipoyl-ACP can also act as a substrate although octanoyl-ACP is likely to be the physiological substrate. This chain is Octanoyltransferase, found in Buchnera aphidicola subsp. Baizongia pistaciae (strain Bp).